A 90-amino-acid chain; its full sequence is Long neurotoxin 1 (90 aa).

Residues 1–21 (MKTLLLTLVVVTIVCLDVGNS) form the signal peptide. 5 disulfides stabilise this stretch: cysteine 24/cysteine 42, cysteine 35/cysteine 63, cysteine 48/cysteine 52, cysteine 67/cysteine 78, and cysteine 79/cysteine 84.

The protein belongs to the three-finger toxin family. Long-chain subfamily. Type II alpha-neurotoxin sub-subfamily. Expressed by the venom gland.

The protein resides in the secreted. Its function is as follows. Binds with high affinity to muscular (alpha-1/CHRNA1) and neuronal (alpha-7/CHRNA7) nicotinic acetylcholine receptor (nAChR) and inhibits acetylcholine from binding to the receptor, thereby impairing neuromuscular and neuronal transmission. This Austrelaps superbus (Lowland copperhead snake) protein is Long neurotoxin 1.